Reading from the N-terminus, the 281-residue chain is Undecaprenyl-diphosphatase (281 aa).

8 consecutive transmembrane segments (helical) span residues Leu-5–Ile-25, Val-48–Trp-68, Phe-92–Ala-112, Leu-118–Ala-138, Val-154–Met-174, Val-192–Leu-212, Ala-226–Ile-246, and Phe-261–Phe-281.

Belongs to the UppP family.

It is found in the cell membrane. It carries out the reaction di-trans,octa-cis-undecaprenyl diphosphate + H2O = di-trans,octa-cis-undecaprenyl phosphate + phosphate + H(+). Functionally, catalyzes the dephosphorylation of undecaprenyl diphosphate (UPP). Confers resistance to bacitracin. This chain is Undecaprenyl-diphosphatase, found in Ruminiclostridium cellulolyticum (strain ATCC 35319 / DSM 5812 / JCM 6584 / H10) (Clostridium cellulolyticum).